Reading from the N-terminus, the 122-residue chain is MTRVRRGYTARRRRIKIRLFASTFRGAHSRLTRTTTQQKMRALVSSHRDRGRQKRDFRRLWITRINAVTRDNGVFHSYSKFIHNLYKRQLLLNRKILAQIAIENKNCLYMISNKISQIKEII.

It belongs to the bacterial ribosomal protein bL20 family.

It localises to the plastid. The protein resides in the chloroplast. Its function is as follows. Binds directly to 23S ribosomal RNA and is necessary for the in vitro assembly process of the 50S ribosomal subunit. It is not involved in the protein synthesizing functions of that subunit. The protein is Large ribosomal subunit protein bL20c of Dioscorea elephantipes (Elephant's foot yam).